Here is a 550-residue protein sequence, read N- to C-terminus: Hydroxylamine reductase (550 aa).

[2Fe-2S] cluster is bound by residues cysteine 3, cysteine 6, cysteine 18, and cysteine 25. Residues histidine 249, glutamate 273, cysteine 317, cysteine 405, cysteine 433, cysteine 458, glutamate 492, and lysine 494 each contribute to the hybrid [4Fe-2O-2S] cluster site. Cysteine 405 is subject to Cysteine persulfide.

It belongs to the HCP family. It depends on [2Fe-2S] cluster as a cofactor. Hybrid [4Fe-2O-2S] cluster serves as cofactor.

The protein localises to the cytoplasm. The catalysed reaction is A + NH4(+) + H2O = hydroxylamine + AH2 + H(+). Functionally, catalyzes the reduction of hydroxylamine to form NH(3) and H(2)O. In Enterobacter sp. (strain 638), this protein is Hydroxylamine reductase.